The chain runs to 473 residues: MHDNIFLPDAFLAQVQETMPSYLSMDEFIAACKRPLRRSIRVNILKNSVEEFKQRAAEKQWDLEPVPWCDTGFWITRPESDTVKLGSTAEHMAGLFYIQEASSMMPVTALLKDNDDIEMALDMASAPGSKTTQLAAGMKNQGALVANEFSSSRVKVLCSNIQRCGVSNVALTHFDGRVFGGWLPETFDSILLDAPCSGEGTIRKDPDAMHNWSPESVIEIGDTQRDLIESAFHALKLGGVMVYSTCTLNHEENQNICHHLVEQFGDAVTFEPLGDLFESAEKALTKEGFLHIYPQIFDSEGFFVAKIRKNSSTTPPEVKKRLGKFPFAPASNKEAQAIEAELKSTLQLAIPEDNEFWIRDKEVWAFPKRMKPLIGEMRYHRIGFKLAETHKKGYRWQHEAIMALATADNPTCAELNTEQAREWYMGRDVRPDFSGKGETIVTYKGAVIGLGKWVGNRIKNGLPRELVRDGNLF.

S-adenosyl-L-methionine-binding positions include 124–130 (ASAPGSK), Glu-148, Asp-175, and Asp-193. The active-site Nucleophile is the Cys-246.

It belongs to the class I-like SAM-binding methyltransferase superfamily. RsmB/NOP family.

It is found in the cytoplasm. The catalysed reaction is cytidine(1407) in 16S rRNA + S-adenosyl-L-methionine = 5-methylcytidine(1407) in 16S rRNA + S-adenosyl-L-homocysteine + H(+). Specifically methylates the cytosine at position 1407 (m5C1407) of 16S rRNA. The polypeptide is Ribosomal RNA small subunit methyltransferase F (Aliivibrio fischeri (strain ATCC 700601 / ES114) (Vibrio fischeri)).